Reading from the N-terminus, the 272-residue chain is HMP-PP phosphatase (272 aa).

The active-site Nucleophile is Asp8. 3 residues coordinate Mg(2+): Asp8, Asp10, and Asp212.

The protein belongs to the HAD-like hydrolase superfamily. Cof family. It depends on Mg(2+) as a cofactor.

It carries out the reaction 4-amino-2-methyl-5-(diphosphooxymethyl)pyrimidine + H2O = 4-amino-2-methyl-5-(phosphooxymethyl)pyrimidine + phosphate + H(+). Catalyzes the hydrolysis of 4-amino-2-methyl-5-hydroxymethylpyrimidine pyrophosphate (HMP-PP) to 4-amino-2-methyl-5-hydroxymethylpyrimidine phosphate (HMP-P). This Escherichia coli (strain 55989 / EAEC) protein is HMP-PP phosphatase.